The following is an 873-amino-acid chain: Protein SEY1 (873 aa).

The tract at residues 1–20 is disordered; that stretch reads MVANGHFAGSADGQHSSSYE. At 1-749 the chain is on the cytoplasmic side; it reads MVANGHFAGS…KRSAIGGITQ (749 aa). The GB1/RHD3-type G domain occupies 49–307; the sequence is GFNYHLISVF…IPADGFAVYA (259 aa). 59 to 66 lines the GTP pocket; sequence GSQSTGKS. Positions 482–506 form a coiled coil; that stretch reads SNYQQELSLYQKDLERTSGQLRRDE. Positions 677–703 are disordered; the sequence is DKWIGHTPSSATPADEEDLTPIGGVDD. Residues 690–703 show a composition bias toward acidic residues; the sequence is ADEEDLTPIGGVDD. Residues 750-770 form a helical membrane-spanning segment; sequence VPLYFYGLLFALGWNEILAVL. Topologically, residues 771 to 773 are lumenal; that stretch reads RNP. Residues 774–794 form a helical membrane-spanning segment; that stretch reads VYFLLLFVCAIGAYITYQLNL. The Cytoplasmic segment spans residues 795–873; sequence WGPIIKMTEA…EDVDDDDDDF (79 aa). Positions 828–873 are disordered; sequence RQAMAMSGARNATEEHEMSRLSRKPAERGGRKNRADEDVDDDDDDF. A compositionally biased stretch (basic and acidic residues) spans 839–863; the sequence is ATEEHEMSRLSRKPAERGGRKNRAD. Over residues 864 to 873 the composition is skewed to acidic residues; that stretch reads EDVDDDDDDF.

The protein belongs to the TRAFAC class dynamin-like GTPase superfamily. GB1/RHD3 GTPase family. RHD3 subfamily.

It is found in the endoplasmic reticulum membrane. Its function is as follows. Cooperates with the reticulon proteins and tubule-shaping DP1 family proteins to generate and maintain the structure of the tubular endoplasmic reticulum network. Has GTPase activity, which is required for its function in ER organization. This chain is Protein SEY1, found in Ajellomyces capsulatus (strain NAm1 / WU24) (Darling's disease fungus).